The primary structure comprises 70 residues: MPGIVLRSDDNFDASYRRFKKQTDRNLIVTEARARRFHETKTEKRKKFLIASRKKMLKRLYMMRRYESRL.

This sequence belongs to the bacterial ribosomal protein bS21 family.

The polypeptide is Small ribosomal subunit protein bS21 (Sulfurimonas denitrificans (strain ATCC 33889 / DSM 1251) (Thiomicrospira denitrificans (strain ATCC 33889 / DSM 1251))).